A 434-amino-acid polypeptide reads, in one-letter code: 3-phosphoshikimate 1-carboxyvinyltransferase (434 aa).

Residues K22, S23, and R27 each contribute to the 3-phosphoshikimate site. A phosphoenolpyruvate-binding site is contributed by K22. Positions 94 and 122 each coordinate phosphoenolpyruvate. Residues S169, S170, Q171, S199, D320, and K347 each coordinate 3-phosphoshikimate. Q171 is a phosphoenolpyruvate binding site. D320 functions as the Proton acceptor in the catalytic mechanism. R351, R395, and K420 together coordinate phosphoenolpyruvate.

This sequence belongs to the EPSP synthase family. In terms of assembly, monomer.

Its subcellular location is the cytoplasm. The enzyme catalyses 3-phosphoshikimate + phosphoenolpyruvate = 5-O-(1-carboxyvinyl)-3-phosphoshikimate + phosphate. Its pathway is metabolic intermediate biosynthesis; chorismate biosynthesis; chorismate from D-erythrose 4-phosphate and phosphoenolpyruvate: step 6/7. Catalyzes the transfer of the enolpyruvyl moiety of phosphoenolpyruvate (PEP) to the 5-hydroxyl of shikimate-3-phosphate (S3P) to produce enolpyruvyl shikimate-3-phosphate and inorganic phosphate. The sequence is that of 3-phosphoshikimate 1-carboxyvinyltransferase from Ralstonia pickettii (strain 12J).